Reading from the N-terminus, the 253-residue chain is Probable U3 small nucleolar RNA-associated protein 11 (253 aa).

Positions 1-26 are disordered; the sequence is MAAAFRKAAKSRQREHRERSQPGFRK. Glycyl lysine isopeptide (Lys-Gly) (interchain with G-Cter in SUMO2) cross-links involve residues Lys74, Lys83, and Lys86. Position 90 is a phosphothreonine (Thr90). Glycyl lysine isopeptide (Lys-Gly) (interchain with G-Cter in SUMO2) cross-links involve residues Lys103, Lys120, Lys143, Lys144, Lys180, Lys211, Lys218, Lys235, and Lys236. Residue Ser241 is modified to Phosphoserine. A Glycyl lysine isopeptide (Lys-Gly) (interchain with G-Cter in SUMO2) cross-link involves residue Lys246.

It belongs to the UTP11 family. As to quaternary structure, part of the small subunit (SSU) processome, composed of more than 70 proteins and the RNA chaperone small nucleolar RNA (snoRNA) U3.

The protein localises to the nucleus. The protein resides in the nucleolus. In terms of biological role, part of the small subunit (SSU) processome, first precursor of the small eukaryotic ribosomal subunit. During the assembly of the SSU processome in the nucleolus, many ribosome biogenesis factors, an RNA chaperone and ribosomal proteins associate with the nascent pre-rRNA and work in concert to generate RNA folding, modifications, rearrangements and cleavage as well as targeted degradation of pre-ribosomal RNA by the RNA exosome. Involved in nucleolar processing of pre-18S ribosomal RNA. This Homo sapiens (Human) protein is Probable U3 small nucleolar RNA-associated protein 11.